We begin with the raw amino-acid sequence, 653 residues long: Sodium-dependent phosphate transporter 2 (653 aa).

Over 1 to 5 (MAIDG) the chain is Extracellular. Residues 6–26 (YLWMVILGFIIAFILAFSVGA) traverse the membrane as a helical segment. Residues 27 to 46 (NDVANSFGTAVGSGVVTLRQ) are Cytoplasmic-facing. Residues 47-67 (ACILASIFETTGSVLLGAKVG) traverse the membrane as a helical segment. Over 68-86 (ETIRKGIIDVNLYNETVET) the chain is Extracellular. An N-linked (GlcNAc...) asparagine glycan is attached at N81. The chain crosses the membrane as a helical span at residues 87 to 107 (LMAGEVSAMVGSAVWQLIASF). Residues 108–109 (LR) lie on the Cytoplasmic side of the membrane. The chain crosses the membrane as a helical span at residues 110-130 (LPISGTHCIVGSTIGFSLVAI). The Extracellular portion of the chain corresponds to 131 to 142 (GTQGVQWMELVK). A helical transmembrane segment spans residues 143–163 (IVASWFISPLLSGFMSGVLFI). Residues 164–190 (LIRIFILKKEDPVPNGLRALPVFYAAT) are Cytoplasmic-facing. A helical transmembrane segment spans residues 191 to 211 (IAINVFSIMYTGAPVLGLVLP). The Extracellular portion of the chain corresponds to 212-213 (IW). A helical membrane pass occupies residues 214-234 (AIALISFGVALLFALFVWLFV). Topologically, residues 235 to 483 (CPWMRRKIAG…EEKEEKDTAE (249 aa)) are cytoplasmic. S253, S256, S259, and S268 each carry phosphoserine. The interval 275–311 (PGAKANDDSTVPLTGSAGEPSGTSEGTSVGNHPRASY) is disordered. Residues 295–304 (SGTSEGTSVG) are compositionally biased toward polar residues. Phosphoserine occurs at positions 316 and 385. Residues 459-478 (SELTDPDQPRDDPAEEEKEE) are disordered. A helical transmembrane segment spans residues 484 to 504 (VHLLFHFLQVLTACFGSFAHG). Over 505–531 (GNDVSNAIGPLVALWLIYEQGAVLQEA) the chain is Extracellular. The helical transmembrane segment at 532–552 (VTPVWLLFYGGVGICTGLWVW) threads the bilayer. Residues 553-572 (GRRVIQTMGKDLTPITPSSG) are Cytoplasmic-facing. The helical transmembrane segment at 573–587 (FTIELASAFTVVIAS) threads the bilayer. Over 588-594 (NVGLPVS) the chain is Extracellular. The helical transmembrane segment at 595–610 (TTHCKVGSVVAVGWIR) threads the bilayer. Residues 611–622 (SRKAVDWRLFRN) are Cytoplasmic-facing. The chain crosses the membrane as a helical span at residues 623–643 (IFVAWFVTVPVAGLFSAAIMA). At 644 to 653 (LLMYGILPYV) the chain is on the extracellular side.

This sequence belongs to the inorganic phosphate transporter (PiT) (TC 2.A.20) family. In terms of assembly, homodimer.

It is found in the cell membrane. It localises to the apical cell membrane. It catalyses the reaction 2 Na(+)(out) + phosphate(out) = 2 Na(+)(in) + phosphate(in). Sodium-phosphate symporter which preferentially transports the monovalent form of phosphate with a stoichiometry of two sodium ions per phosphate ion. Plays a critical role in the determination of bone quality and strength by providing phosphate for bone mineralization. Required to maintain normal cerebrospinal fluid phosphate levels. Mediates phosphate-induced calcification of vascular smooth muscle cells (VCMCs) and can functionally compensate for loss of SLC20A1 in VCMCs. In terms of biological role, (Microbial infection) Functions as a retroviral receptor for feline leukemia virus subgroup B (FeLV-B). This Felis catus (Cat) protein is Sodium-dependent phosphate transporter 2 (SLC20A2).